Here is a 93-residue protein sequence, read N- to C-terminus: Parbolysin P4 (93 aa).

Intrachain disulfides connect Cys16–Cys37, Cys22–Cys33, and Cys47–Cys60.

It belongs to the worm cytolysin family. Localized within the skin and proboscis and are most readily isolated from body mucus secretions.

It is found in the secreted. In terms of biological role, cytolysin that shows hemolytic activity (on bovine erythrocytes, HC(50)=5.75 mg/ml). This hemolytic activity is completely inhibited by small unilamelar vesicles composed of PC/PG, PC/PI and PC/PS in 1:1 molar ratios (with at least 100 mg/ml concentration). The polypeptide is Parbolysin P4 (Parborlasia corrugatus (Antarctic nemertean worm)).